The following is a 443-amino-acid chain: Chromosomal replication initiator protein DnaA (443 aa).

Residues 1-76 (METKALWEKL…KSVLNSYVSV (76 aa)) are domain I, interacts with DnaA modulators. Positions 76-99 (VDFLTKEIFEKNTKKENKKEPINT) are domain II. Positions 100–320 (VLSENALTFE…GLVNRLLFFG (221 aa)) are domain III, AAA+ region. Positions 145, 147, 148, and 149 each coordinate ATP. Residues 321–443 (IQNDLGHIID…ESLKNEIIGK (123 aa)) form a domain IV, binds dsDNA region.

The protein belongs to the DnaA family. In terms of assembly, oligomerizes as a right-handed, spiral filament on DNA at oriC.

The protein resides in the cytoplasm. In terms of biological role, plays an essential role in the initiation and regulation of chromosomal replication. ATP-DnaA binds to the origin of replication (oriC) to initiate formation of the DNA replication initiation complex once per cell cycle. Binds the DnaA box (a 9 base pair repeat at the origin) and separates the double-stranded (ds)DNA. Forms a right-handed helical filament on oriC DNA; dsDNA binds to the exterior of the filament while single-stranded (ss)DNA is stabiized in the filament's interior. The ATP-DnaA-oriC complex binds and stabilizes one strand of the AT-rich DNA unwinding element (DUE), permitting loading of DNA polymerase. After initiation quickly degrades to an ADP-DnaA complex that is not apt for DNA replication. Binds acidic phospholipids. The polypeptide is Chromosomal replication initiator protein DnaA (Mesoplasma florum (strain ATCC 33453 / NBRC 100688 / NCTC 11704 / L1) (Acholeplasma florum)).